The primary structure comprises 135 residues: Sex-regulated protein janus-A (135 aa).

Lys37 contributes to the substrate binding site. His63 serves as the catalytic Proton acceptor. 104–106 (SQG) lines the substrate pocket.

This sequence belongs to the janus family.

Its function is as follows. JanA and janB regulate somatic sex differentiation. This chain is Sex-regulated protein janus-A (janA), found in Drosophila mauritiana (Fruit fly).